The primary structure comprises 209 residues: Thymidine kinase (209 aa).

ATP-binding positions include 9–16 (SAMNAGKT) and 88–91 (DEAQ). E89 functions as the Proton acceptor in the catalytic mechanism.

This sequence belongs to the thymidine kinase family. As to quaternary structure, homotetramer.

Its subcellular location is the cytoplasm. It catalyses the reaction thymidine + ATP = dTMP + ADP + H(+). This Xanthomonas oryzae pv. oryzae (strain MAFF 311018) protein is Thymidine kinase.